Here is a 152-residue protein sequence, read N- to C-terminus: MRVVVQRAKHAKVTVNGEVVGSIDHGLVLLVGVTHSDTVEDAAFIADKIAHLRIFEDESGKMNLSVLDVGGEILSVSQFTLYGDCRKGRRPNFMEAAKPDRALPIYEAMNEALRQKGIRVETGKFGAMMEVELINDGPVTLIVESKEKAGNK.

The short motif at 137–138 is the Gly-cisPro motif, important for rejection of L-amino acids element; sequence GP.

This sequence belongs to the DTD family. As to quaternary structure, homodimer.

It localises to the cytoplasm. The catalysed reaction is glycyl-tRNA(Ala) + H2O = tRNA(Ala) + glycine + H(+). The enzyme catalyses a D-aminoacyl-tRNA + H2O = a tRNA + a D-alpha-amino acid + H(+). An aminoacyl-tRNA editing enzyme that deacylates mischarged D-aminoacyl-tRNAs. Also deacylates mischarged glycyl-tRNA(Ala), protecting cells against glycine mischarging by AlaRS. Acts via tRNA-based rather than protein-based catalysis; rejects L-amino acids rather than detecting D-amino acids in the active site. By recycling D-aminoacyl-tRNA to D-amino acids and free tRNA molecules, this enzyme counteracts the toxicity associated with the formation of D-aminoacyl-tRNA entities in vivo and helps enforce protein L-homochirality. This chain is D-aminoacyl-tRNA deacylase, found in Geobacillus sp. (strain WCH70).